Consider the following 378-residue polypeptide: tRNA-specific 2-thiouridylase MnmA (378 aa).

ATP-binding positions include 9 to 16 (GVSGGVDS) and M35. The segment at 94–96 (NPD) is interaction with target base in tRNA. Catalysis depends on C99, which acts as the Nucleophile. A disulfide bond links C99 and C195. Residue G123 coordinates ATP. The tract at residues 145–147 (KDQ) is interaction with tRNA. Residue C195 is the Cysteine persulfide intermediate of the active site. The tract at residues 307–308 (RY) is interaction with tRNA.

It belongs to the MnmA/TRMU family.

It localises to the cytoplasm. The catalysed reaction is S-sulfanyl-L-cysteinyl-[protein] + uridine(34) in tRNA + AH2 + ATP = 2-thiouridine(34) in tRNA + L-cysteinyl-[protein] + A + AMP + diphosphate + H(+). Functionally, catalyzes the 2-thiolation of uridine at the wobble position (U34) of tRNA, leading to the formation of s(2)U34. In Xanthomonas oryzae pv. oryzae (strain MAFF 311018), this protein is tRNA-specific 2-thiouridylase MnmA.